Here is a 428-residue protein sequence, read N- to C-terminus: L-fucose-proton symporter (428 aa).

Transmembrane regions (helical) follow at residues 10–30 (FIVP…ANDI), 51–71 (LVQL…ALFA), 78–98 (AGIL…WPAA), 100–120 (YEIF…LAFL), 147–167 (FNPL…LTNL), 204–224 (IALG…KMPA), 250–270 (EGVI…TFIV), 288–308 (IIAM…MKYL), 311–331 (EFML…VIFI), 339–359 (CLIL…GIAL), 371–391 (AGLV…GMII), and 401–421 (AVNF…IYGF).

The protein belongs to the major facilitator superfamily. FHS transporter (TC 2.A.1.7) family.

It is found in the cell inner membrane. It catalyses the reaction L-fucose(in) + H(+)(in) = L-fucose(out) + H(+)(out). Mediates the uptake of L-fucose across the boundary membrane with the concomitant transport of protons into the cell (symport system). This chain is L-fucose-proton symporter (fucP), found in Haemophilus influenzae (strain ATCC 51907 / DSM 11121 / KW20 / Rd).